Consider the following 247-residue polypeptide: tRNA pseudouridine synthase A (247 aa).

The Nucleophile role is filled by Asp-52. Substrate is bound at residue Tyr-113.

It belongs to the tRNA pseudouridine synthase TruA family. In terms of assembly, homodimer.

It carries out the reaction uridine(38/39/40) in tRNA = pseudouridine(38/39/40) in tRNA. Functionally, formation of pseudouridine at positions 38, 39 and 40 in the anticodon stem and loop of transfer RNAs. This Bartonella quintana (strain Toulouse) (Rochalimaea quintana) protein is tRNA pseudouridine synthase A.